The chain runs to 249 residues: Leucyl/phenylalanyl-tRNA--protein transferase (249 aa).

This sequence belongs to the L/F-transferase family.

The protein resides in the cytoplasm. It catalyses the reaction N-terminal L-lysyl-[protein] + L-leucyl-tRNA(Leu) = N-terminal L-leucyl-L-lysyl-[protein] + tRNA(Leu) + H(+). The enzyme catalyses N-terminal L-arginyl-[protein] + L-leucyl-tRNA(Leu) = N-terminal L-leucyl-L-arginyl-[protein] + tRNA(Leu) + H(+). It carries out the reaction L-phenylalanyl-tRNA(Phe) + an N-terminal L-alpha-aminoacyl-[protein] = an N-terminal L-phenylalanyl-L-alpha-aminoacyl-[protein] + tRNA(Phe). Functionally, functions in the N-end rule pathway of protein degradation where it conjugates Leu, Phe and, less efficiently, Met from aminoacyl-tRNAs to the N-termini of proteins containing an N-terminal arginine or lysine. The chain is Leucyl/phenylalanyl-tRNA--protein transferase from Xanthomonas axonopodis pv. citri (strain 306).